A 556-amino-acid polypeptide reads, in one-letter code: Testis-specific protein 10-interacting protein (556 aa).

Residues 1 to 16 (MGQDTDMLNTYQQLVR) are compositionally biased toward polar residues. 4 disordered regions span residues 1–31 (MGQD…LQAP), 50–102 (GCLG…LLPR), 123–155 (LQPS…ANLP), and 179–309 (GGVS…QWRK). The span at 208 to 219 (GSASDKQVQLQS) shows a compositional bias: polar residues. Over residues 244-258 (SEEEQFSEATEEAEE) the composition is skewed to acidic residues. Positions 289–301 (QGQSQGSSPSFNN) are enriched in polar residues. The stretch at 379–464 (RQEATRSLLQ…LQGIQHRVQA (86 aa)) forms a coiled coil. Positions 503-556 (AGKVDREGTPRKPRSHRSMGVRMEHSPQRPPRTEPTGSQPDRHYNPSLDPECSP) are disordered.

The chain is Testis-specific protein 10-interacting protein (TSGA10IP) from Homo sapiens (Human).